Here is an 859-residue protein sequence, read N- to C-terminus: Envelope glycoprotein gp160 (859 aa).

A signal peptide spans 1-24; sequence MCGRNQLFVASLLASACLIYCVQY. Residues 25 to 673 are Extracellular-facing; sequence VTVFYGVPVW…LTSWIKYIQY (649 aa). An N-linked (GlcNAc...) asparagine; by host glycan is attached at Asn-36. Cys-43 and Cys-56 form a disulfide bridge. Asn-69, Asn-78, Asn-113, Asn-119, Asn-131, Asn-137, Asn-145, Asn-160, Asn-173, Asn-186, Asn-200, Asn-232, Asn-235, Asn-242, Asn-266, Asn-272, Asn-283, Asn-294, Asn-304, Asn-359, Asn-392, Asn-402, Asn-405, Asn-442, Asn-457, and Asn-460 each carry an N-linked (GlcNAc...) asparagine; by host glycan. 5 disulfides stabilise this stretch: Cys-100/Cys-208, Cys-107/Cys-199, Cys-112/Cys-157, Cys-221/Cys-251, and Cys-231/Cys-243. The interval 112-156 is V1; the sequence is CNSTTAKNTTSTPTTTTTANTTIGENSSCIRTDNCTGLGEEEMVD. The tract at residues 157-199 is V2; it reads CQFNMTGLERDKKKLYNETWYSKDVVCESNDTKKEKTCYMNHC. Residues 299-331 are V3; the sequence is CKRPGNKTVVPITLMSGLVFHSQPINRRPRQAW. An intrachain disulfide couples Cys-299 to Cys-332. Disulfide bonds link Cys-384/Cys-441 and Cys-391/Cys-414. Residues 391–414 are V4; that stretch reads CNMTWFLNWVENRTNQTQHNYVPC. The segment at 457–463 is V5; it reads NQTNITF. Positions 506–526 are fusion peptide; that stretch reads GVFVLGFLGFLTTAGAAMGAA. An immunosuppression region spans residues 569-585; that stretch reads LQARVTAIEKYLKDQAQ. 3 N-linked (GlcNAc...) asparagine; by host glycosylation sites follow: Asn-605, Asn-614, and Asn-630. Residues 614 to 646 are a coiled coil; that stretch reads NMTWQEWEQRIRNLEANISESLEQAQIQQEKNM. An MPER; binding to GalCer region spans residues 651–672; sequence KLNSWDVFGNWFDLTSWIKYIQ. A helical transmembrane segment spans residues 674–694; that stretch reads GVYIVVGIIVLRIVIYVVQML. The Cytoplasmic portion of the chain corresponds to 695 to 859; that stretch reads SRLRKGYRPV…IRQGAEIALL (165 aa). The short motif at 701–704 is the YXXV motif; contains endocytosis signal element; it reads YRPV. Cys-767 carries the S-palmitoyl cysteine; by host lipid modification. The Di-leucine internalization motif signature appears at 858 to 859; it reads LL.

The mature envelope protein (Env) consists of a homotrimer of non-covalently associated gp120-gp41 heterodimers. The resulting complex protrudes from the virus surface as a spike. There seems to be as few as 10 spikes on the average virion. Interacts with human CD4, CCR5 and CXCR4, to form a P4HB/PDI-CD4-CXCR4-gp120 complex. Gp120 also interacts with the C-type lectins CD209/DC-SIGN and CLEC4M/DC-SIGNR (collectively referred to as DC-SIGN(R)). Gp120 and gp41 interact with GalCer. In terms of assembly, the mature envelope protein (Env) consists of a homotrimer of non-covalently associated gp120-gp41 heterodimers. The resulting complex protrudes from the virus surface as a spike. There seems to be as few as 10 spikes on the average virion. Specific enzymatic cleavages in vivo yield mature proteins. Envelope glycoproteins are synthesized as an inactive precursor that is heavily N-glycosylated and processed likely by host cell furin in the Golgi to yield the mature SU and TM proteins. The cleavage site between SU and TM requires the minimal sequence [KR]-X-[KR]-R. Post-translationally, palmitoylation of the transmembrane protein and of Env polyprotein (prior to its proteolytic cleavage) is essential for their association with host cell membrane lipid rafts. Palmitoylation is therefore required for envelope trafficking to classical lipid rafts, but not for viral replication.

Its subcellular location is the virion membrane. It localises to the host cell membrane. The protein localises to the host endosome membrane. The surface protein gp120 (SU) attaches the virus to the host lymphoid cell by binding to the primary receptor CD4. This interaction induces a structural rearrangement creating a high affinity binding site for a chemokine coreceptor like CXCR4 and/or CCR5. This peculiar 2 stage receptor-interaction strategy allows gp120 to maintain the highly conserved coreceptor-binding site in a cryptic conformation, protected from neutralizing antibodies. Since CD4 also displays a binding site for the disulfide-isomerase P4HB/PDI, a P4HB/PDI-CD4-CXCR4-gp120 complex may form. In that complex, P4HB/PDI could reach and reduce gp120 disulfide bonds, causing major conformational changes in gp120. TXN, another PDI family member could also be involved in disulfide rearrangements in Env during fusion. These changes are transmitted to the transmembrane protein gp41 and are thought to activate its fusogenic potential by unmasking its fusion peptide. Its function is as follows. The surface protein gp120 is a ligand for CD209/DC-SIGN and CLEC4M/DC-SIGNR, which are respectively found on dendritic cells (DCs), and on endothelial cells of liver sinusoids and lymph node sinuses. These interactions allow capture of viral particles at mucosal surfaces by these cells and subsequent transmission to permissive cells. DCs are professional antigen presenting cells, critical for host immunity by inducing specific immune responses against a broad variety of pathogens. They act as sentinels in various tissues where they take up antigen, process it, and present it to T-cells following migration to lymphoid organs. HIV subverts the migration properties of dendritic cells to gain access to CD4+ T-cells in lymph nodes. Virus transmission to permissive T-cells occurs either in trans (without DCs infection, through viral capture and transmission), or in cis (following DCs productive infection, through the usual CD4-gp120 interaction), thereby inducing a robust infection. In trans infection, bound virions remain infectious over days and it is proposed that they are not degraded, but protected in non-lysosomal acidic organelles within the DCs close to the cell membrane thus contributing to the viral infectious potential during DCs' migration from the periphery to the lymphoid tissues. On arrival at lymphoid tissues, intact virions recycle back to DCs' cell surface allowing virus transmission to CD4+ T-cells. Virion capture also seems to lead to MHC-II-restricted viral antigen presentation, and probably to the activation of HIV-specific CD4+ cells. Functionally, the transmembrane protein gp41 (TM) acts as a class I viral fusion protein. Under the current model, the protein has at least 3 conformational states: pre-fusion native state, pre-hairpin intermediate state, and post-fusion hairpin state. During fusion of viral and target intracellular membranes, the coiled coil regions (heptad repeats) assume a trimer-of-hairpins structure, positioning the fusion peptide in close proximity to the C-terminal region of the ectodomain. The formation of this structure appears to drive apposition and subsequent fusion of viral and target cell membranes. Complete fusion occurs in host cell endosomes and is dynamin-dependent, however some lipid transfer might occur at the plasma membrane. The virus undergoes clathrin-dependent internalization long before endosomal fusion, thus minimizing the surface exposure of conserved viral epitopes during fusion and reducing the efficacy of inhibitors targeting these epitopes. Membranes fusion leads to delivery of the nucleocapsid into the cytoplasm. In terms of biological role, the envelope glycoprotein gp160 precursor down-modulates cell surface CD4 antigen by interacting with it in the endoplasmic reticulum and blocking its transport to the cell surface. The gp120-gp41 heterodimer seems to contribute to T-cell depletion during HIV-1 infection. The envelope glycoproteins expressed on the surface of infected cells induce apoptosis through an interaction with uninfected cells expressing the receptor (CD4) and the coreceptors CXCR4 or CCR5. This type of bystander killing may be obtained by at least three distinct mechanisms. First, the interaction between the 2 cells can induce cellular fusion followed by nuclear fusion within the syncytium. Syncytia are condemned to die from apoptosis. Second, the 2 interacting cells may not fuse entirely and simply exchange plasma membrane lipids, after a sort of hemifusion process, followed by rapid death. Third, it is possible that virus-infected cells, on the point of undergoing apoptosis, fuse with CD4-expressing cells, in which case apoptosis is rapidly transmitted from one cell to the other and thus occurs in a sort of contagious fashion. Its function is as follows. The gp120-gp41 heterodimer allows rapid transcytosis of the virus through CD4 negative cells such as simple epithelial monolayers of the intestinal, rectal and endocervical epithelial barriers. Both gp120 and gp41 specifically recognize glycosphingolipids galactosyl-ceramide (GalCer) or 3' sulfo-galactosyl-ceramide (GalS) present in the lipid rafts structures of epithelial cells. Binding to these alternative receptors allows the rapid transcytosis of the virus through the epithelial cells. This transcytotic vesicle-mediated transport of virions from the apical side to the basolateral side of the epithelial cells does not involve infection of the cells themselves. This Homo sapiens (Human) protein is Envelope glycoprotein gp160 (env).